Reading from the N-terminus, the 115-residue chain is MPRRRRRRGSSGAGGRGRTCSRTVRAELSFSVSQVERSLREGHYAQRLSRTAPVYLAAVIEYLTAKVLELAGNEAQNSGERNITPLLLDMVVHNDRLLSTLFNTTTISQVAPGED.

Residues 1 to 21 are disordered; that stretch reads MPRRRRRRGSSGAGGRGRTCS. The docking domain stretch occupies residues 87-115; it reads LLDMVVHNDRLLSTLFNTTTISQVAPGED.

Belongs to the histone H2A family. In terms of assembly, the nucleosome is a histone octamer containing two molecules each of H2A, H2B, H3 and H4 assembled in one H3-H4 heterotetramer and two H2A-H2B heterodimers. May be incorporated into a proportion of nucleosomes, replacing one or more H2A molecules. In terms of tissue distribution, present in mature sperm.

It localises to the nucleus. It is found in the chromosome. Atypical histone H2A which can replace conventional H2A in some nucleosomes and is associated with active transcription and mRNA processing. Nucleosomes wrap and compact DNA into chromatin, limiting DNA accessibility to the cellular machineries which require DNA as a template. Histones thereby play a central role in transcription regulation, DNA repair, DNA replication and chromosomal stability. Nucleosomes containing this histone are less rigid and organize less DNA than canonical nucleosomes in vivo. They are enriched in actively transcribed genes and associate with the elongating form of RNA polymerase. They associate with spliceosome components and are required for mRNA splicing. May participate in spermatogenesis. The sequence is that of Histone H2A-Bbd type 2/3 from Homo sapiens (Human).